The sequence spans 156 residues: Snaclec A12 (156 aa).

The N-terminal stretch at 1-23 (MGRSISVSFGLLVVFLSLSGTGA) is a signal peptide. 3 cysteine pairs are disulfide-bonded: C27/C38, C55/C148, and C123/C140. In terms of domain architecture, C-type lectin spans 34-149 (YEGHCYKVFN…CELAYHFICM (116 aa)).

It belongs to the snaclec family. In terms of assembly, heterodimer; disulfide-linked. In terms of tissue distribution, expressed by the venom gland.

The protein localises to the secreted. Interferes with one step of hemostasis (modulation of platelet aggregation, or coagulation cascade, for example). The sequence is that of Snaclec A12 from Macrovipera lebetinus (Levantine viper).